Consider the following 379-residue polypeptide: Forkhead box protein E1 (379 aa).

Positions 1–11 (MTAESQQSPTR) are enriched in polar residues. A disordered region spans residues 1-65 (MTAESQQSPT…RRRKRPLQKG (65 aa)). The span at 54–63 (KGRRRKRPLQ) shows a compositional bias: basic residues. The fork-head DNA-binding region spans 66-160 (KPPYSYIALI…DSGSFLRRRK (95 aa)). A disordered region spans residues 239–265 (HSGSEHAQPPNRSISPEVNSTSSSSCN). A compositionally biased stretch (low complexity) spans 251 to 265 (SISPEVNSTSSSSCN).

In terms of tissue distribution, first expressed at late neural tube and early tailbud stages in the hypophyseal placode. Expression continues in the developing pituitary at late tailbud stages. As development progresses, expressed in the mesoderm of the branchial arches. At stage 38, expressed in the developing thyroid and in the pharyngeal endoderm.

It is found in the nucleus. Its function is as follows. Transcription factor that binds consensus sites on a variety of gene promoters and activate their transcription. The protein is Forkhead box protein E1 of Xenopus laevis (African clawed frog).